Reading from the N-terminus, the 142-residue chain is Small ribosomal subunit protein uS12 (142 aa).

The segment at 1-30 (MGKTHGMGAARKLKSHRRTQRWADKSYKKS) is disordered. Positions 11-20 (RKLKSHRRTQ) are enriched in basic residues. A compositionally biased stretch (basic and acidic residues) spans 21-30 (RWADKSYKKS). At Pro61 the chain carries Hydroxyproline.

Belongs to the universal ribosomal protein uS12 family.

This is Small ribosomal subunit protein uS12 (RPS23) from Euphorbia esula (Leafy spurge).